The following is a 90-amino-acid chain: PqqA binding protein 2 (90 aa).

Belongs to the PqqD family. As to quaternary structure, monomer. Interacts with PqqE.

The protein operates within cofactor biosynthesis; pyrroloquinoline quinone biosynthesis. Its function is as follows. Functions as a PqqA binding protein and presents PqqA to PqqE, in the pyrroloquinoline quinone (PQQ) biosynthetic pathway. The chain is PqqA binding protein 2 (pqqD2) from Pseudomonas putida (strain ATCC 47054 / DSM 6125 / CFBP 8728 / NCIMB 11950 / KT2440).